The following is a 359-amino-acid chain: MSTLNKYKTLIIISSLAAVSSCSWFSAKDGTEDIDDRYMKSQQDLELQVPPNVKQIEVQDRYRVPEGVIITNRNAKGKALSLDPPQLLLVGGDGVREDSEQSHPTVWVRHQDTPFMNYVSRFMMQKNIPVISSTEKQISSDWISDEDEDIFSQYIGSYNLDGQRHKVTLEIIGQNANEVAVQARNTQSQRLVDDKWVTMNTSKTVASQFLNAFLGFYDTERTKEARERILEEGTINVSLGTNSQGQIALIAERDLIAIWEHLPSVLEDLNLSVSDRDQSAGIYYFNVKEPETGFWAWLWGNDETNAKVDMEPGDYQIHLAATTYGVSMTFKDEEGNLLDSNLVTKIYPEFAASFKSRGK.

The first 21 residues, 1-21 (MSTLNKYKTLIIISSLAAVSS), serve as a signal peptide directing secretion. Cys22 carries N-palmitoyl cysteine lipidation. Residue Cys22 is the site of S-diacylglycerol cysteine attachment.

This sequence belongs to the BamC family. In terms of assembly, part of the Bam complex.

Its subcellular location is the cell outer membrane. In terms of biological role, part of the outer membrane protein assembly complex, which is involved in assembly and insertion of beta-barrel proteins into the outer membrane. The protein is Outer membrane protein assembly factor BamC of Kangiella koreensis (strain DSM 16069 / JCM 12317 / KCTC 12182 / SW-125).